The chain runs to 367 residues: 2-oxoisovalerate dehydrogenase subunit alpha (367 aa).

Residues Phe-66, Tyr-95, 128–131 (MPEH), and Ser-144 each bind substrate. 94–96 (YYR) serves as a coordination point for thiamine diphosphate. Thiamine diphosphate is bound by residues 144–146 (SPI), 174–180 (GDGATSE), 204–208 (NFYAI), and His-273. Mg(2+) contacts are provided by Asp-175, Asn-204, and Tyr-206.

It belongs to the BCKDHA family. In terms of assembly, heterotetramer of two alpha and two beta chains. Directly associated with ODBB in the E1 complex. Thiamine diphosphate serves as cofactor.

The enzyme catalyses N(6)-[(R)-lipoyl]-L-lysyl-[protein] + 3-methyl-2-oxobutanoate + H(+) = N(6)-[(R)-S(8)-2-methylpropanoyldihydrolipoyl]-L-lysyl-[protein] + CO2. The branched-chain alpha-keto dehydrogenase complex catalyzes the overall conversion of alpha-keto acids to acyl-CoA and CO(2). It contains multiple copies of three enzymatic components: branched-chain alpha-keto acid decarboxylase (E1), lipoamide acyltransferase (E2) and lipoamide dehydrogenase (E3). This is 2-oxoisovalerate dehydrogenase subunit alpha from Thermus thermophilus (strain ATCC 27634 / DSM 579 / HB8).